A 92-amino-acid chain; its full sequence is Small ribosomal subunit protein uS19c (92 aa).

Belongs to the universal ribosomal protein uS19 family.

The protein resides in the plastid. Its subcellular location is the chloroplast. Protein S19 forms a complex with S13 that binds strongly to the 16S ribosomal RNA. The protein is Small ribosomal subunit protein uS19c of Phaseolus angularis (Azuki bean).